The sequence spans 330 residues: GMP reductase (330 aa).

The active-site Thioimidate intermediate is the cysteine 180. Leucine 209–valine 232 contributes to the NADP(+) binding site.

Belongs to the IMPDH/GMPR family. GuaC type 2 subfamily.

The catalysed reaction is IMP + NH4(+) + NADP(+) = GMP + NADPH + 2 H(+). Functionally, catalyzes the irreversible NADPH-dependent deamination of GMP to IMP. It functions in the conversion of nucleobase, nucleoside and nucleotide derivatives of G to A nucleotides, and in maintaining the intracellular balance of A and G nucleotides. The chain is GMP reductase from Lactobacillus acidophilus (strain ATCC 700396 / NCK56 / N2 / NCFM).